The following is a 1029-amino-acid chain: Protein SUPPRESSOR OF PHYA-105 1 (1029 aa).

Positions 42–69 are disordered; sequence SETANSDCPGSSAHRNVDLTKPPPPEEA. A Protein kinase domain is found at 188–529; it reads VQMKTPVSSS…ARDILKSELI (342 aa). ATP contacts are provided by residues 194–202 and lysine 216; that span reads VSSSNFSQL. The segment at 213–269 is disordered; sequence VVGKNQETPPEFVSDQDLGSKEKKLDISKSPTPHDVLPLKSSPKGNGMVSHGDGNHS. The span at 230–239 shows a compositional bias: basic and acidic residues; sequence LGSKEKKLDI. Catalysis depends on aspartate 316, which acts as the Proton acceptor. A disordered region spans residues 347–392; it reads EDLNRRRPVVEESSSGGRDSKKRKMDLHLNSPGNQLQATSTGRPFK. Over residues 377–388 the composition is skewed to polar residues; the sequence is SPGNQLQATSTG. A coiled-coil region spans residues 557–589; it reads VQKKKKASKLLQDIQTLEDDIKEAERRYSSNVS. Residues 653-679 form a disordered region; sequence ARSDKTLKDRDRCSENQNENQDMSTKG. Over residues 654-666 the composition is skewed to basic and acidic residues; sequence RSDKTLKDRDRCS. The segment covering 667–679 has biased composition (polar residues); the sequence is ENQNENQDMSTKG. 7 WD repeats span residues 714–753, 763–803, 806–846, 848–888, 892–930, 932–971, and 997–1029; these read NSAS…NESV, VNKS…GFSQ, EHQK…SLGT, WSPA…TPWC, GHEK…SSGL, PGAC…YSYY, and DNGQ…LKLV. The short motif at 866–881 is the DWD box element; it reads LAFGSADYKVYCYDLR.

In terms of assembly, interacts with CO, COP1, HFR1, HY5 and PHYA. Light induces dissociation of the SPA1/COP1 complex. Binds to CRY1 in response to blue light, this interaction prevents SPA1/COP1 complex formation but stimulate CRY2/COP1 complex, and thus avoid COP1-dependent degradation of the transcription factor HY5 by the proteasome and promotes hypocotyl elongation.

Its subcellular location is the nucleus speckle. It localises to the nucleus. The protein localises to the PML body. In terms of biological role, controls normal photoperiodic flowering and regulates circadian rhythms. Required for suppression of photomorphogenesis in dark-grown seedlings and for normal elongation growth of adult plants. Integral component of the COP1/SPA E3 ubiquitin-protein ligase complex. Involved in HY5, HFR1, LAF1 and CO degradation. This chain is Protein SUPPRESSOR OF PHYA-105 1 (SPA1), found in Arabidopsis thaliana (Mouse-ear cress).